Reading from the N-terminus, the 180-residue chain is Large ribosomal subunit protein uL6 (180 aa).

It belongs to the universal ribosomal protein uL6 family. As to quaternary structure, part of the 50S ribosomal subunit.

Its function is as follows. This protein binds to the 23S rRNA, and is important in its secondary structure. It is located near the subunit interface in the base of the L7/L12 stalk, and near the tRNA binding site of the peptidyltransferase center. This is Large ribosomal subunit protein uL6 from Mesoplasma florum (strain ATCC 33453 / NBRC 100688 / NCTC 11704 / L1) (Acholeplasma florum).